A 192-amino-acid chain; its full sequence is Segregation and condensation protein B (192 aa).

The protein belongs to the ScpB family. Homodimer. Homodimerization may be required to stabilize the binding of ScpA to the Smc head domains. Component of a cohesin-like complex composed of ScpA, ScpB and the Smc homodimer, in which ScpA and ScpB bind to the head domain of Smc. The presence of the three proteins is required for the association of the complex with DNA.

It localises to the cytoplasm. In terms of biological role, participates in chromosomal partition during cell division. May act via the formation of a condensin-like complex containing Smc and ScpA that pull DNA away from mid-cell into both cell halves. This Mycoplasma mobile (strain ATCC 43663 / 163K / NCTC 11711) (Mesomycoplasma mobile) protein is Segregation and condensation protein B.